A 132-amino-acid polypeptide reads, in one-letter code: Small ribosomal subunit protein uS8 (132 aa).

The protein belongs to the universal ribosomal protein uS8 family. As to quaternary structure, part of the 30S ribosomal subunit. Contacts proteins S5 and S12.

Its function is as follows. One of the primary rRNA binding proteins, it binds directly to 16S rRNA central domain where it helps coordinate assembly of the platform of the 30S subunit. The polypeptide is Small ribosomal subunit protein uS8 (Rhizobium etli (strain CIAT 652)).